Reading from the N-terminus, the 304-residue chain is Ribosomal RNA small subunit methyltransferase H (304 aa).

Residues 37-39, Asp57, Phe79, Asp100, and His107 each bind S-adenosyl-L-methionine; that span reads AGH.

This sequence belongs to the methyltransferase superfamily. RsmH family.

The protein resides in the cytoplasm. It carries out the reaction cytidine(1402) in 16S rRNA + S-adenosyl-L-methionine = N(4)-methylcytidine(1402) in 16S rRNA + S-adenosyl-L-homocysteine + H(+). Its function is as follows. Specifically methylates the N4 position of cytidine in position 1402 (C1402) of 16S rRNA. The polypeptide is Ribosomal RNA small subunit methyltransferase H (Bacteroides thetaiotaomicron (strain ATCC 29148 / DSM 2079 / JCM 5827 / CCUG 10774 / NCTC 10582 / VPI-5482 / E50)).